The chain runs to 92 residues: Large ribosomal subunit protein eL43 (92 aa).

The C4-type zinc-finger motif lies at 39–60 (CQFCGKDAMKRQAVGIWGCKSC).

It belongs to the eukaryotic ribosomal protein eL43 family.

This is Large ribosomal subunit protein eL43 (RPL37A) from Cryptochiton stelleri (Giant gumboot chiton).